A 323-amino-acid chain; its full sequence is tRNA U34 carboxymethyltransferase (323 aa).

Residues K91, W105, K110, G130, 181-182 (IE), M196, Y200, and R315 contribute to the carboxy-S-adenosyl-L-methionine site.

It belongs to the class I-like SAM-binding methyltransferase superfamily. CmoB family. Homotetramer.

It carries out the reaction carboxy-S-adenosyl-L-methionine + 5-hydroxyuridine(34) in tRNA = 5-carboxymethoxyuridine(34) in tRNA + S-adenosyl-L-homocysteine + H(+). Functionally, catalyzes carboxymethyl transfer from carboxy-S-adenosyl-L-methionine (Cx-SAM) to 5-hydroxyuridine (ho5U) to form 5-carboxymethoxyuridine (cmo5U) at position 34 in tRNAs. The chain is tRNA U34 carboxymethyltransferase from Sodalis glossinidius (strain morsitans).